Here is a 300-residue protein sequence, read N- to C-terminus: Ribosomal RNA small subunit methyltransferase H (300 aa).

Residues 46–48, aspartate 65, phenylalanine 92, aspartate 107, and glutamine 114 contribute to the S-adenosyl-L-methionine site; that span reads GGH.

It belongs to the methyltransferase superfamily. RsmH family.

Its subcellular location is the cytoplasm. It catalyses the reaction cytidine(1402) in 16S rRNA + S-adenosyl-L-methionine = N(4)-methylcytidine(1402) in 16S rRNA + S-adenosyl-L-homocysteine + H(+). In terms of biological role, specifically methylates the N4 position of cytidine in position 1402 (C1402) of 16S rRNA. The polypeptide is Ribosomal RNA small subunit methyltransferase H (Prochlorococcus marinus subsp. pastoris (strain CCMP1986 / NIES-2087 / MED4)).